A 626-amino-acid polypeptide reads, in one-letter code: Bifurcating [FeFe] hydrogenase beta subunit (626 aa).

Residue 198–201 (GGGG) participates in NAD(+) binding. FMN contacts are provided by residues K207 and 224–228 (NGDEG). D229 lines the NAD(+) pocket. FMN-binding positions include 312–317 (FVCGEE) and 350–352 (INN). [4Fe-4S] cluster contacts are provided by C485, C488, C491, C531, C578, C581, C584, C588, C608, C611, C614, and C618. 2 consecutive 4Fe-4S ferredoxin-type domains span residues 569–598 (KKYV…GERG) and 599–626 (KPYT…IELV).

Belongs to the complex I 51 kDa subunit family. Heterotrimer composed of HydA (alpha subunit), HydB (beta subunit) and HydC (gamma subunit). Near neutral and acidic pH conditions favor oligomerization of the heterotrimeric holoenzyme. Requires [2Fe-2S] cluster as cofactor. [4Fe-4S] cluster serves as cofactor. It depends on FMN as a cofactor.

It localises to the cytoplasm. The catalysed reaction is 2 H2 + 2 oxidized [2Fe-2S]-[ferredoxin] + NAD(+) = 2 reduced [2Fe-2S]-[ferredoxin] + NADH + 3 H(+). Functionally, catalyzes the oxidation of the physiological electron carriers NADH and reduced ferredoxin, coupled to the production of H(2). Acts as a bifurcating [FeFe] hydrogenase, which uses the exergonic oxidation of reduced ferredoxin to drive the unfavorable oxidation of NADH to produce H(2). The beta subunit contains flavin- and NAD-binding sites and is potentially the site for NADH oxidation, with the subsequent shuttling of electrons to the alpha subunit. The sequence is that of Bifurcating [FeFe] hydrogenase beta subunit from Thermotoga maritima (strain ATCC 43589 / DSM 3109 / JCM 10099 / NBRC 100826 / MSB8).